The chain runs to 355 residues: Beta-ketoacyl-[acyl-carrier-protein] synthase III 1 (355 aa).

Residues cysteine 122 and histidine 280 contribute to the active site. The interval 281–285 (QANER) is ACP-binding. Asparagine 311 is a catalytic residue.

The protein belongs to the thiolase-like superfamily. FabH family. Homodimer.

The protein localises to the cytoplasm. It catalyses the reaction malonyl-[ACP] + acetyl-CoA + H(+) = 3-oxobutanoyl-[ACP] + CO2 + CoA. It participates in lipid metabolism; fatty acid biosynthesis. Catalyzes the condensation reaction of fatty acid synthesis by the addition to an acyl acceptor of two carbons from malonyl-ACP. Catalyzes the first condensation reaction which initiates fatty acid synthesis and may therefore play a role in governing the total rate of fatty acid production. Possesses both acetoacetyl-ACP synthase and acetyl transacylase activities. Its substrate specificity determines the biosynthesis of branched-chain and/or straight-chain of fatty acids. In Streptomyces avermitilis (strain ATCC 31267 / DSM 46492 / JCM 5070 / NBRC 14893 / NCIMB 12804 / NRRL 8165 / MA-4680), this protein is Beta-ketoacyl-[acyl-carrier-protein] synthase III 1.